A 158-amino-acid polypeptide reads, in one-letter code: NADH-quinone oxidoreductase subunit B (158 aa).

Cys-37, Cys-38, Cys-102, and Cys-132 together coordinate [4Fe-4S] cluster.

It belongs to the complex I 20 kDa subunit family. In terms of assembly, NDH-1 is composed of 14 different subunits. Subunits NuoB, C, D, E, F, and G constitute the peripheral sector of the complex. [4Fe-4S] cluster is required as a cofactor.

The protein resides in the cell inner membrane. The catalysed reaction is a quinone + NADH + 5 H(+)(in) = a quinol + NAD(+) + 4 H(+)(out). Its function is as follows. NDH-1 shuttles electrons from NADH, via FMN and iron-sulfur (Fe-S) centers, to quinones in the respiratory chain. Couples the redox reaction to proton translocation (for every two electrons transferred, four hydrogen ions are translocated across the cytoplasmic membrane), and thus conserves the redox energy in a proton gradient. This Legionella pneumophila (strain Corby) protein is NADH-quinone oxidoreductase subunit B.